Reading from the N-terminus, the 226-residue chain is Leucyl/phenylalanyl-tRNA--protein transferase (226 aa).

It belongs to the L/F-transferase family.

Its subcellular location is the cytoplasm. It carries out the reaction N-terminal L-lysyl-[protein] + L-leucyl-tRNA(Leu) = N-terminal L-leucyl-L-lysyl-[protein] + tRNA(Leu) + H(+). It catalyses the reaction N-terminal L-arginyl-[protein] + L-leucyl-tRNA(Leu) = N-terminal L-leucyl-L-arginyl-[protein] + tRNA(Leu) + H(+). The enzyme catalyses L-phenylalanyl-tRNA(Phe) + an N-terminal L-alpha-aminoacyl-[protein] = an N-terminal L-phenylalanyl-L-alpha-aminoacyl-[protein] + tRNA(Phe). Functions in the N-end rule pathway of protein degradation where it conjugates Leu, Phe and, less efficiently, Met from aminoacyl-tRNAs to the N-termini of proteins containing an N-terminal arginine or lysine. The polypeptide is Leucyl/phenylalanyl-tRNA--protein transferase (Pseudomonas aeruginosa (strain ATCC 15692 / DSM 22644 / CIP 104116 / JCM 14847 / LMG 12228 / 1C / PRS 101 / PAO1)).